The primary structure comprises 114 residues: T cell receptor beta variable 6-5 (114 aa).

The N-terminal stretch at 1–21 (MSIGLLCCAALSLLWAGPVNA) is a signal peptide. Residues 22–114 (GVTQTPKFQV…TSVYFCASSY (93 aa)) enclose the Ig-like domain. Cys-42 and Cys-110 are joined by a disulfide. N-linked (GlcNAc...) asparagine glycosylation is present at Asn-84.

In terms of assembly, alpha-beta TR is a heterodimer composed of an alpha and beta chain; disulfide-linked. The alpha-beta TR is associated with the transmembrane signaling CD3 coreceptor proteins to form the TR-CD3 (TcR or TCR). The assembly of alpha-beta TR heterodimers with CD3 occurs in the endoplasmic reticulum where a single alpha-beta TR heterodimer associates with one CD3D-CD3E heterodimer, one CD3G-CD3E heterodimer and one CD247 homodimer forming a stable octameric structure. CD3D-CD3E and CD3G-CD3E heterodimers preferentially associate with TR alpha and TR beta chains, respectively. The association of the CD247 homodimer is the last step of TcR assembly in the endoplasmic reticulum and is required for transport to the cell surface.

Its subcellular location is the cell membrane. In terms of biological role, v region of the variable domain of T cell receptor (TR) beta chain that participates in the antigen recognition. Alpha-beta T cell receptors are antigen specific receptors which are essential to the immune response and are present on the cell surface of T lymphocytes. Recognize peptide-major histocompatibility (MH) (pMH) complexes that are displayed by antigen presenting cells (APC), a prerequisite for efficient T cell adaptive immunity against pathogens. Binding of alpha-beta TR to pMH complex initiates TR-CD3 clustering on the cell surface and intracellular activation of LCK that phosphorylates the ITAM motifs of CD3G, CD3D, CD3E and CD247 enabling the recruitment of ZAP70. In turn ZAP70 phosphorylates LAT, which recruits numerous signaling molecules to form the LAT signalosome. The LAT signalosome propagates signal branching to three major signaling pathways, the calcium, the mitogen-activated protein kinase (MAPK) kinase and the nuclear factor NF-kappa-B (NF-kB) pathways, leading to the mobilization of transcription factors that are critical for gene expression and essential for T cell growth and differentiation. The T cell repertoire is generated in the thymus, by V-(D)-J rearrangement. This repertoire is then shaped by intrathymic selection events to generate a peripheral T cell pool of self-MH restricted, non-autoaggressive T cells. Post-thymic interaction of alpha-beta TR with the pMH complexes shapes TR structural and functional avidity. In Homo sapiens (Human), this protein is T cell receptor beta variable 6-5.